Here is a 77-residue protein sequence, read N- to C-terminus: Serine protease inhibitor 2 (77 aa).

An N-terminal signal peptide occupies residues 1–17 (MMFTPLIVLTLLVLATA). 5 disulfide bridges follow: cysteine 21/cysteine 53, cysteine 30/cysteine 48, cysteine 33/cysteine 44, cysteine 37/cysteine 74, and cysteine 55/cysteine 68. The 54-residue stretch at 21 to 74 (CGPNEQWSDCPKCELQCGESDKPCATICGEPKCYCSPDKYRRIPDGRCIRKIQC) folds into the TIL domain.

It localises to the secreted. Defends the organism against the host's proteinases. The sequence is that of Serine protease inhibitor 2 from Anisakis simplex (Herring worm).